Here is a 190-residue protein sequence, read N- to C-terminus: Nodulation protein L (190 aa).

This sequence belongs to the transferase hexapeptide repeat family.

In terms of biological role, acetyltransferase implicated in the O-acetylation of Nod factors. The polypeptide is Nodulation protein L (nodL) (Rhizobium leguminosarum bv. viciae).